Here is a 115-residue protein sequence, read N- to C-terminus: Nucleoid-associated protein tlr0723 (115 aa).

It belongs to the YbaB/EbfC family. In terms of assembly, homodimer.

It is found in the cytoplasm. The protein resides in the nucleoid. Functionally, binds to DNA and alters its conformation. May be involved in regulation of gene expression, nucleoid organization and DNA protection. The protein is Nucleoid-associated protein tlr0723 of Thermosynechococcus vestitus (strain NIES-2133 / IAM M-273 / BP-1).